The sequence spans 373 residues: Anhydro-N-acetylmuramic acid kinase (373 aa).

Position 13-20 (13-20 (GTSMDGID)) interacts with ATP.

It belongs to the anhydro-N-acetylmuramic acid kinase family.

The enzyme catalyses 1,6-anhydro-N-acetyl-beta-muramate + ATP + H2O = N-acetyl-D-muramate 6-phosphate + ADP + H(+). It participates in amino-sugar metabolism; 1,6-anhydro-N-acetylmuramate degradation. The protein operates within cell wall biogenesis; peptidoglycan recycling. Catalyzes the specific phosphorylation of 1,6-anhydro-N-acetylmuramic acid (anhMurNAc) with the simultaneous cleavage of the 1,6-anhydro ring, generating MurNAc-6-P. Is required for the utilization of anhMurNAc either imported from the medium or derived from its own cell wall murein, and thus plays a role in cell wall recycling. The sequence is that of Anhydro-N-acetylmuramic acid kinase from Brucella suis (strain ATCC 23445 / NCTC 10510).